A 381-amino-acid chain; its full sequence is tRNA-specific 2-thiouridylase MnmA (381 aa).

ATP contacts are provided by residues 14 to 21 (AMSGGVDS) and Met-40. Cys-108 acts as the Nucleophile in catalysis. Cysteines 108 and 205 form a disulfide. Gly-132 is a binding site for ATP. The segment at 155–157 (KDQ) is interaction with tRNA. Cys-205 serves as the catalytic Cysteine persulfide intermediate. The tract at residues 309-310 (RY) is interaction with tRNA.

It belongs to the MnmA/TRMU family.

It localises to the cytoplasm. The enzyme catalyses S-sulfanyl-L-cysteinyl-[protein] + uridine(34) in tRNA + AH2 + ATP = 2-thiouridine(34) in tRNA + L-cysteinyl-[protein] + A + AMP + diphosphate + H(+). Functionally, catalyzes the 2-thiolation of uridine at the wobble position (U34) of tRNA, leading to the formation of s(2)U34. The chain is tRNA-specific 2-thiouridylase MnmA from Deinococcus geothermalis (strain DSM 11300 / CIP 105573 / AG-3a).